The following is a 227-amino-acid chain: ATP-dependent dethiobiotin synthetase BioD (227 aa).

Position 13 to 18 (13 to 18) interacts with ATP; that stretch reads DIGKTY. Thr-17 lines the Mg(2+) pocket. Residue Lys-38 is part of the active site. Ser-42 is a substrate binding site. ATP is bound by residues Asp-55, 116 to 119, and 179 to 180; these read EGSG and NN. The Mg(2+) site is built by Asp-55 and Glu-116.

Belongs to the dethiobiotin synthetase family. In terms of assembly, homodimer. Requires Mg(2+) as cofactor.

The protein localises to the cytoplasm. The catalysed reaction is (7R,8S)-7,8-diammoniononanoate + CO2 + ATP = (4R,5S)-dethiobiotin + ADP + phosphate + 3 H(+). It functions in the pathway cofactor biosynthesis; biotin biosynthesis; biotin from 7,8-diaminononanoate: step 1/2. In terms of biological role, catalyzes a mechanistically unusual reaction, the ATP-dependent insertion of CO2 between the N7 and N8 nitrogen atoms of 7,8-diaminopelargonic acid (DAPA, also called 7,8-diammoniononanoate) to form a ureido ring. This chain is ATP-dependent dethiobiotin synthetase BioD, found in Clostridium botulinum (strain Okra / Type B1).